The sequence spans 393 residues: Major outer membrane porin, serovar E (393 aa).

The signal sequence occupies residues 1–22 (MKKLLKSVLVFAALSSASSLQA).

The protein belongs to the chlamydial porin (CP) (TC 1.B.2) family. In terms of assembly, part of a disulfide cross-linked outer membrane complex (COMC) composed of the major outer membrane porin (MOMP), the small cysteine-rich protein (OmcA) and the large cysteine-rich periplasmic protein (OmcB).

Its subcellular location is the cell outer membrane. In elementary bodies (EBs, the infectious stage, which is able to survive outside the host cell) provides the structural integrity of the outer envelope through disulfide cross-links with the small cysteine-rich protein and the large cysteine-rich periplasmic protein. It has been described in publications as the Sarkosyl-insoluble COMC (Chlamydia outer membrane complex), and serves as the functional equivalent of peptidoglycan. Functionally, permits diffusion of specific solutes through the outer membrane. This Chlamydia trachomatis protein is Major outer membrane porin, serovar E (ompA).